We begin with the raw amino-acid sequence, 403 residues long: Zinc metalloproteinase nas-8 (403 aa).

Residues 1–29 (MRRNDLLNNKITIFLSSLSLFVIIIPIYA) form the signal peptide. The propeptide occupies 30-111 (AEKDLLPPST…DPKNSESLRR (82 aa)). The Peptidase M12A domain occupies 112–307 (NGVITGTRKW…LKMNLMYQCS (196 aa)). 5 disulfides stabilise this stretch: Cys-154–Cys-306, Cys-176–Cys-195, Cys-338–Cys-372, Cys-345–Cys-365, and Cys-352–Cys-369. His-203 contacts Zn(2+). The active site involves Glu-204. Zn(2+) contacts are provided by His-207 and His-213. Residues 338-372 (CRDRTNLCWRWIDRCKSFFFEQIMKEFCSLSCGYC) enclose the ShKT domain. Asn-386 carries N-linked (GlcNAc...) asparagine glycosylation.

Requires Zn(2+) as cofactor.

The protein resides in the secreted. The catalysed reaction is Hydrolysis of peptide bonds in substrates containing five or more amino acids, preferentially with Ala in P1', and Pro in P2'.. Functionally, metalloprotease. This Caenorhabditis elegans protein is Zinc metalloproteinase nas-8 (nas-8).